Here is a 544-residue protein sequence, read N- to C-terminus: Chitin-inducible gibberellin-responsive protein 2 (544 aa).

The segment at 1–123 (MADTPTSRMI…VGASCVTEDP (123 aa)) is disordered. Polar residues-rich tracts occupy residues 15-30 (NIPS…SDNP), 63-74 (SQATPNKYTLDS), and 86-101 (PSSQ…PLSQ). The GRAS domain maps to 165–544 (RMMGIPRGNL…RPLVVSSAWH (380 aa)). A leucine repeat I (LRI) region spans residues 172-232 (GNLKELLIAC…VARLASSGIS (61 aa)). The interval 251 to 316 (MHFLYEACPY…GGPPTVRITG (66 aa)) is VHIID. Positions 282–286 (IHIID) match the VHIID motif. The leucine repeat II (LRII) stretch occupies residues 332–364 (LVGRRLSHIASLCKVPFEFHPLAISGSKVEAAH). The segment at 373 to 467 (LAVNFTLELH…QHCLAREIVN (95 aa)) is PFYRE. Residues 470–544 (ACEGEERAER…RPLVVSSAWH (75 aa)) are SAW.

It belongs to the GRAS family.

It localises to the nucleus. Its function is as follows. May play a regulatory role in the early step of oligosaccharide elicitor response, downstream of the membrane-associated high-affinity chitin-binding protein. In Oryza sativa subsp. japonica (Rice), this protein is Chitin-inducible gibberellin-responsive protein 2 (CIGR2).